Reading from the N-terminus, the 497-residue chain is MTKMIPPVPTAAAAVMMPTPKQKIGFSIESIVGNDVSTAGGNSTPDLSGPQSPPPGERNVPGSPPQTPPATLTLIPGSPPHHLMAPPAHGLPYPHPHAQQQQQQHLQAPHPHPHLSPAQQHVLHQHLLMQHQHPGTPKSHQDIQELLQRLHHNAAMASGLSPLQTRLSPETEQPQMAVSLKRERSPAPPAMEQAENPAQRIQPPHTPPKSVSPQSSQPSSSPTLLISSPHATPPQQQQQQPPPNYPKPAMMHPGGAGPMMMPGMPPAGLVRPFPMGPGGPPMPQGQPGLPDIKALPPYINAPPELPPQHNPHLIAAAQFQMAAALQAGHVLGPAAAAAAAAGLPPHAAQFMPNPGMARDSYQLYPWLLSRHGRIFPHRFPGSFLVPPFRKPKRIRTAFSPSQLLKLEHAFESNQYVVGAERKALAQNLNLSETQVKVWFQNRRTKHKRMQQEDEKGGEGGSQRNMHNGSGDEDDDELIDMEMDECPSDEEHELDASH.

Disordered stretches follow at residues 34–117 (NDVS…HLSP), 161–262 (SPLQ…MMMP), and 441–497 (NRRT…DASH). Residues 35–50 (DVSTAGGNSTPDLSGP) are compositionally biased toward polar residues. A compositionally biased stretch (pro residues) spans 51-68 (QSPPPGERNVPGSPPQTP). A compositionally biased stretch (low complexity) spans 96–117 (PHAQQQQQQHLQAPHPHPHLSP). Residues 161–176 (SPLQTRLSPETEQPQM) are compositionally biased toward polar residues. Composition is skewed to low complexity over residues 208-239 (PKSV…QQQQ) and 248-262 (PAMM…MMMP). Positions 391-450 (PKRIRTAFSPSQLLKLEHAFESNQYVVGAERKALAQNLNLSETQVKVWFQNRRTKHKRMQ) form a DNA-binding region, homeobox. Residues 470–497 (GDEDDDELIDMEMDECPSDEEHELDASH) are compositionally biased toward acidic residues.

The protein belongs to the EMX homeobox family.

Its subcellular location is the nucleus. Acts as a homeotic selector gene controlling antennal and mandibular segment identity. The chain is Homeotic protein empty spiracles (ems) from Drosophila melanogaster (Fruit fly).